Consider the following 41-residue polypeptide: QSEFCGHDVGECVPPKLVCRPPTHECLHFPCPGYLKCCCYP.

Intrachain disulfides connect Cys5/Cys37, Cys12/Cys31, Cys19/Cys38, and Cys26/Cys39.

In terms of tissue distribution, expressed in tentacles.

The protein resides in the nematocyst. It is found in the secreted. Functionally, peptide with unknown function. Does not exhibit any effect on human ion channel TRPV1 in a Xenopus laevis oocytes assay. This is Peptide Hact-SCRiP1 from Heliofungia actiniformis (Mushroom coral).